Reading from the N-terminus, the 928-residue chain is G-protein coupled receptor family C group 6 member A (928 aa).

The signal sequence occupies residues 1 to 20 (MALSFVFITCFMILLDTSQS). The Extracellular segment spans residues 21–594 (CHTPDDFVAI…EYLDWDDSLA (574 aa)). Asn-332 and Asn-555 each carry an N-linked (GlcNAc...) asparagine glycan. A helical transmembrane segment spans residues 595–615 (LLLIALSLLGIAFVLAVGIIF). Topologically, residues 616-630 (TRNLKTPVVKSSGGL) are cytoplasmic. Residues 631-651 (VVCYVMLACHALNFASTGFFI) form a helical membrane-spanning segment. Topologically, residues 652–669 (GEPQDFTCKTRQTLFGVS) are extracellular. Residues 670–690 (FTLCVSCILTKSLKILLAFSF) traverse the membrane as a helical segment. Residues 691–706 (DPTLKTFLKCLYRPVP) are Cytoplasmic-facing. Residues 707 to 727 (IVLTCTGIQVVICTLWLVLAA) traverse the membrane as a helical segment. The Extracellular segment spans residues 728 to 750 (PTVEENTSLPRVIILECEEGSAL). Residues 751-771 (AFGTMLGYIAVLAFICFVFAF) form a helical membrane-spanning segment. Residues 772 to 784 (KGRKLPENYNEAK) are Cytoplasmic-facing. A helical membrane pass occupies residues 785 to 805 (FLTFGMLIYFIAWITFIPVYA). The Extracellular segment spans residues 806-812 (TTFGKYL). The chain crosses the membrane as a helical span at residues 813–833 (PAVEIIVILISNYGILCCTFF). Over 834–928 (PKCYIILCKQ…TLHQKRSSSI (95 aa)) the chain is Cytoplasmic.

It belongs to the G-protein coupled receptor 3 family. As to quaternary structure, homodimer; disulfide-linked. In terms of processing, N-glycosylated. As to expression, high expression in soft palate. Weak expression in kidney, liver, lung and brain. No expression detected in heart, testis, skeletal muscle amd spleen.

It localises to the cell membrane. Its function is as follows. Receptor activated by multiple ligands, including osteocalcin (BGLAP), basic amino acids, and various cations. Activated by amino acids with a preference for basic amino acids such as L-Lys, L-Arg and L-ornithine but also by small and polar amino acids. The L-alpha amino acids respond is augmented by divalent cations Ca(2+) and Mg(2+). Seems to act through a G(q)/G(11) and G(i)-coupled pathway. Regulates testosterone production by acting as a ligand for uncarboxylated osteocalcin hormone: osteocalcin-binding at the surface of Leydig cells initiates a signaling response that promotes the expression of enzymes required for testosterone synthesis in a CREB-dependent manner. Mediates the non-genomic effects of androgens in multiple tissue. May coordinate nutritional and hormonal anabolic signals through the sensing of extracellular amino acids, osteocalcin, divalent ions and its responsiveness to anabolic steroids. The polypeptide is G-protein coupled receptor family C group 6 member A (Gprc6a) (Rattus norvegicus (Rat)).